The primary structure comprises 217 residues: Probable GTP-binding protein EngB (217 aa).

The 178-residue stretch at alanine 37–glutamate 214 folds into the EngB-type G domain. Residues glycine 45–serine 52, glycine 72–glutamate 76, aspartate 92–glycine 95, threonine 159–aspartate 162, and threonine 193–serine 195 each bind GTP. Serine 52 and threonine 74 together coordinate Mg(2+).

It belongs to the TRAFAC class TrmE-Era-EngA-EngB-Septin-like GTPase superfamily. EngB GTPase family. It depends on Mg(2+) as a cofactor.

Functionally, necessary for normal cell division and for the maintenance of normal septation. This chain is Probable GTP-binding protein EngB, found in Rhodopseudomonas palustris (strain BisB5).